Here is a 1493-residue protein sequence, read N- to C-terminus: Mitogen-activated protein kinase kinase kinase 1 (1493 aa).

Composition is skewed to low complexity over residues 1–23 (MAAA…ASPE) and 33–42 (GSGAPAAGAG). 2 disordered regions span residues 1–171 (MAAA…DRPE) and 222–295 (LQGE…EETS). An N-acetylalanine modification is found at alanine 2. The residue at position 21 (serine 21) is a Phosphoserine. The span at 84–94 (PPCPSTSPSPE) shows a compositional bias: pro residues. Low complexity-rich tracts occupy residues 95 to 108 (PADA…FQPA) and 135 to 151 (ARSP…APSG). Serine 137 is subject to Phosphoserine. Residues 152–171 (REMENKETLKGLHKMDDRPE) are compositionally biased toward basic and acidic residues. Over residues 230-257 (SAAPAPKGRRSPSPGSSPSGRSGKPESP) the composition is skewed to low complexity. Serine 265 carries the post-translational modification Phosphoserine. Threonine 275 carries the post-translational modification Phosphothreonine. Residues serine 282, serine 287, and serine 290 each carry the phosphoserine modification. The SWIM-type zinc-finger motif lies at 328-356 (YRVFIGPQNCSCGRGTFCIHLLFVMLRVF). The segment at 433–482 (CPICLLGMLDEESLTVCEDGCRNKLHHHCMSIWAEECRRNREPLICPLCR) adopts an RING-type zinc-finger fold. Polar residues predominate over residues 496–506 (SSPVDSPTSLR). Disordered regions lie at residues 496–524 (SSPV…SQRR), 866–910 (DTLD…LSAS), 923–955 (VGLP…SPLS), and 992–1060 (PCKI…ASKN). Phosphoserine is present on residues serine 497, serine 521, and serine 910. Over residues 507-522 (GVQQPSSPQQPVAGSQ) the composition is skewed to low complexity. Polar residues-rich tracts occupy residues 925 to 940 (LPSS…TVQT) and 998 to 1014 (ASPQ…QRTC). 2 positions are modified to phosphoserine: serine 999 and serine 1024. The span at 1049-1060 (GSTSKLGDASKN) shows a compositional bias: polar residues. The 266-residue stretch at 1224–1489 (WLKGQQIGLG…SRELLKHPVF (266 aa)) folds into the Protein kinase domain. ATP-binding positions include 1230–1238 (IGLGAFSSC) and lysine 1253. Residue aspartate 1350 is the Proton acceptor of the active site. Residues threonine 1381 and threonine 1393 each carry the phosphothreonine; by autocatalysis modification.

The protein belongs to the protein kinase superfamily. STE Ser/Thr protein kinase family. MAP kinase kinase kinase subfamily. As to quaternary structure, binds both upstream activators and downstream substrates in multimolecular complexes through its N-terminus. Oligomerizes after binding MAP4K2 or TRAF2. Interacts (via the kinase catalytic domain) with STK38. Interacts with GRIPAP1. It depends on Mg(2+) as a cofactor. Autophosphorylated. Most highly expressed in spleen, kidney and lung.

It is found in the membrane. It carries out the reaction L-seryl-[protein] + ATP = O-phospho-L-seryl-[protein] + ADP + H(+). The catalysed reaction is L-threonyl-[protein] + ATP = O-phospho-L-threonyl-[protein] + ADP + H(+). Its activity is regulated as follows. Activated by autophosphorylation on Thr-1381 and Thr-1393 following oligomerization. Component of a protein kinase signal transduction cascade. Activates the ERK and JNK kinase pathways by phosphorylation of MAP2K1 and MAP2K4. May phosphorylate the MAPK8/JNK1 kinase. Activates CHUK and IKBKB, the central protein kinases of the NF-kappa-B pathway. This is Mitogen-activated protein kinase kinase kinase 1 (Map3k1) from Rattus norvegicus (Rat).